Reading from the N-terminus, the 84-residue chain is Large ribosomal subunit protein uL23 (84 aa).

This sequence belongs to the universal ribosomal protein uL23 family. In terms of assembly, part of the 50S ribosomal subunit. Contacts protein L29.

Binds to 23S rRNA. One of the proteins that surrounds the polypeptide exit tunnel on the outside of the ribosome. The protein is Large ribosomal subunit protein uL23 of Haloquadratum walsbyi (strain DSM 16790 / HBSQ001).